Reading from the N-terminus, the 322-residue chain is Protein IRREGULAR XYLEM 15 (322 aa).

Residues 28–48 (LWLLAFVSFFTIVFLLTLLYT) traverse the membrane as a helical segment.

Expressed in rosette leaves, stems and siliques. Expressed in the xylem.

The protein resides in the golgi apparatus membrane. Required for xylan biosynthesis, but not directly involved in catalyzing the addition of sugars to the growing polymer. The protein is Protein IRREGULAR XYLEM 15 (IRX15) of Arabidopsis thaliana (Mouse-ear cress).